Here is a 1221-residue protein sequence, read N- to C-terminus: DNA replication helicase (1221 aa).

The Nuclear localization signal motif lies at 692–701; that stretch reads PKCKCYKKIK. 917–924 contributes to the ATP binding site; it reads GEPGSGKS. Positions 967 to 981 form a DNA-binding region, H-T-H motif; it reads INELKQCSESYFKKH.

In terms of assembly, interacts with IE1 and LEF-3.

The protein resides in the host nucleus. The enzyme catalyses ATP + H2O = ADP + phosphate + H(+). In terms of biological role, essential for initiation of viral DNA replication, it may contribute to other functions such as controlling the switch to the late phase and leading to the inhibition of host protein synthesis. Required for late and very late gene expression. The protein is DNA replication helicase (HELI) of Lepidoptera (butterflies and moths).